The primary structure comprises 279 residues: Replication protein A 32 kDa subunit A (279 aa).

The disordered stretch occupies residues 1-33 (MFSSSQFEPNSGFSGGGFMSSQPSQAYESSSST). Over residues 19–32 (MSSQPSQAYESSSS) the composition is skewed to low complexity. The segment at residues 73–148 (VSLVGLVCDK…QLLVFSVRPI (76 aa)) is a DNA-binding region (OB).

It belongs to the replication factor A protein 2 family. In terms of assembly, heterotrimer of RPA1, RPA2 and RPA3 (canonical replication protein A complex). Interacts with ROS1. Binds to ASE1/At3g02920, PDX2, At5g62350, RPA1A/At2g06510, ARF1/At1g10630, At4g18590 and At3g52630. Phosphorylated in a cell-cycle-dependent manner (from the S phase until mitosis). In response to DNA damage, recruited to DNA-repair nuclear foci, as a hypophosphorylated form. Strongly expressed in shoot and root meristems. Present in seedlings, roots, leaves, siliques and flowers.

It is found in the nucleus. In terms of biological role, component of the replication protein A complex (RPA) required for DNA recombination, repair and replication. The activity of RPA is mediated by single-stranded DNA binding and protein interactions. Required fo cell division in meristems. Involved in the maintenance of transcriptional epigenetic gene silencing (TGS) at specific loci (including some transposons) by regulating histone H3 acetylation, 'Lys-4' and 'Lys-9' methylation. The protein is Replication protein A 32 kDa subunit A (RPA2A) of Arabidopsis thaliana (Mouse-ear cress).